Reading from the N-terminus, the 149-residue chain is Flagellar basal-body protein FlbY (149 aa).

The basal body constitutes a major portion of the flagellar organelle and consists of five rings (E,L,P,S, and M) mounted on a central rod.

The protein localises to the bacterial flagellum basal body. In Caulobacter vibrioides (strain ATCC 19089 / CIP 103742 / CB 15) (Caulobacter crescentus), this protein is Flagellar basal-body protein FlbY (flbY).